Reading from the N-terminus, the 524-residue chain is Ribose import ATP-binding protein RbsA (524 aa).

ABC transporter domains are found at residues leucine 17 to isoleucine 252 and isoleucine 263 to valine 505. Glycine 49–serine 56 lines the ATP pocket.

Belongs to the ABC transporter superfamily. Ribose importer (TC 3.A.1.2.1) family. As to quaternary structure, the complex is composed of an ATP-binding protein (RbsA), two transmembrane proteins (RbsC) and a solute-binding protein (RbsB).

It is found in the cell membrane. It carries out the reaction D-ribose(out) + ATP + H2O = D-ribose(in) + ADP + phosphate + H(+). Its function is as follows. Part of the ABC transporter complex RbsABC involved in ribose import. Responsible for energy coupling to the transport system. In Corynebacterium glutamicum (strain ATCC 13032 / DSM 20300 / JCM 1318 / BCRC 11384 / CCUG 27702 / LMG 3730 / NBRC 12168 / NCIMB 10025 / NRRL B-2784 / 534), this protein is Ribose import ATP-binding protein RbsA.